A 965-amino-acid polypeptide reads, in one-letter code: Receptor-like protein 15 (965 aa).

Positions 1-23 (MEGKVFLGHNLIWVMLLMGQLHG) are cleaved as a signal peptide. The Extracellular portion of the chain corresponds to 24–916 (YKSCIDEEKI…GVEADESIID (893 aa)). 4 N-linked (GlcNAc...) asparagine glycosylation sites follow: asparagine 57, asparagine 95, asparagine 109, and asparagine 145. LRR repeat units follow at residues 80–102 (EISF…LHPF), 103–127 (EDVR…GYKS), 131–154 (LRKL…FLSA), 156–179 (TSLT…ELRD), 180–204 (LTNL…ELSS), 206–230 (RKLK…KFCT), 243–267 (LNNM…LTSL), 268–290 (TGLR…SLGS), 292–315 (QSLE…SLAN), 316–341 (LSNL…SWKP), 342–365 (KFQL…LLHQ), 366–389 (KDLR…LLAN), 391–415 (TKLK…AHNL), 417–435 (FLDV…NIGW), 437–461 (FPHL…LGNM), 462–485 (NGIQ…FVNG), and 487–512 (YSMA…NFTN). The N-linked (GlcNAc...) asparagine glycan is linked to asparagine 194. The N-linked (GlcNAc...) asparagine glycan is linked to asparagine 315. N-linked (GlcNAc...) asparagine glycosylation is found at asparagine 377 and asparagine 389. Asparagine 444 carries an N-linked (GlcNAc...) asparagine glycan. N-linked (GlcNAc...) asparagine glycosylation is present at asparagine 509. The LRR 18; degenerate repeat unit spans residues 514–533 (LGLFMDNNLFTGKIGQGLRS). 11 LRR repeats span residues 534-557 (LINL…WIGE), 558-582 (LPSL…LFNK), 584-606 (SLQL…HDSR), 608-627 (GVVL…DTLL), 628-652 (ANVE…NIQN), 654-674 (SILL…LCGL), 675-698 (SNIQ…LSNT), 778-801 (LKLL…EFGG), 802-825 (LLEL…SISS), 827-850 (EKME…LTEL), and 851-875 (TSLS…QFNT). N-linked (GlcNAc...) asparagine glycosylation is found at asparagine 546 and asparagine 581. N-linked (GlcNAc...) asparagine glycosylation is found at asparagine 652, asparagine 662, asparagine 688, and asparagine 697. N-linked (GlcNAc...) asparagine glycans are attached at residues asparagine 809 and asparagine 814. N-linked (GlcNAc...) asparagine glycosylation is found at asparagine 862, asparagine 893, and asparagine 898. Residues 917-937 (MVSFYLSFAAAYVTILIGILA) form a helical membrane-spanning segment. Topologically, residues 938–965 (SLSFDSPWSRFWFYKVDAFIKKVRNLLL) are cytoplasmic.

The protein belongs to the RLP family.

Its subcellular location is the cell membrane. The polypeptide is Receptor-like protein 15 (Arabidopsis thaliana (Mouse-ear cress)).